The following is a 175-amino-acid chain: Peptide deformylase (175 aa).

Fe cation is bound by residues Cys-99 and His-141. Glu-142 is an active-site residue. His-145 lines the Fe cation pocket.

The protein belongs to the polypeptide deformylase family. Fe(2+) serves as cofactor.

The enzyme catalyses N-terminal N-formyl-L-methionyl-[peptide] + H2O = N-terminal L-methionyl-[peptide] + formate. Functionally, removes the formyl group from the N-terminal Met of newly synthesized proteins. Requires at least a dipeptide for an efficient rate of reaction. N-terminal L-methionine is a prerequisite for activity but the enzyme has broad specificity at other positions. In Rickettsia canadensis (strain McKiel), this protein is Peptide deformylase.